We begin with the raw amino-acid sequence, 93 residues long: Em protein (93 aa).

Residues 1 to 93 (MASGQQERSQ…IDESKFKTKS (93 aa)) are disordered. Composition is skewed to basic and acidic residues over residues 9-19 (SQLDRKAREGE), 38-52 (AEGRSRGGQTRREQM), and 73-93 (GGDRAAREGIDIDESKFKTKS).

It belongs to the small hydrophilic plant seed protein family.

In terms of biological role, it is thought to provide protection for the cytoplasm during the desiccation stage of embryo development. This chain is Em protein (EM), found in Triticum aestivum (Wheat).